Here is an 83-residue protein sequence, read N- to C-terminus: Conotoxin MiEr92 (83 aa).

A signal peptide spans M1–A22. A propeptide spanning residues D23–T49 is cleaved from the precursor. 3 cysteine pairs are disulfide-bonded: C52/C67, C59/C72, and C66/C81.

Belongs to the conotoxin O1 superfamily. Expressed by the venom duct.

It localises to the secreted. The protein is Conotoxin MiEr92 of Conus miles (Soldier cone).